An 85-amino-acid chain; its full sequence is Small ribosomal subunit protein eS27 (85 aa).

The C4-type zinc-finger motif lies at cysteine 38–cysteine 60.

Belongs to the eukaryotic ribosomal protein eS27 family. The cofactor is Zn(2+).

This Dictyostelium discoideum (Social amoeba) protein is Small ribosomal subunit protein eS27 (rps27).